We begin with the raw amino-acid sequence, 393 residues long: Dual-specificity RNA methyltransferase RlmN (393 aa).

The active-site Proton acceptor is the E114. The Radical SAM core domain maps to 120-359 (EGDRATLCVS…VIVRKTRGDD (240 aa)). An intrachain disulfide couples C127 to C364. [4Fe-4S] cluster-binding residues include C134, C138, and C141. Residues 188 to 189 (GE), S220, 242 to 244 (SLH), and N321 each bind S-adenosyl-L-methionine. Residue C364 is the S-methylcysteine intermediate of the active site.

It belongs to the radical SAM superfamily. RlmN family. The cofactor is [4Fe-4S] cluster.

The protein resides in the cytoplasm. It catalyses the reaction adenosine(2503) in 23S rRNA + 2 reduced [2Fe-2S]-[ferredoxin] + 2 S-adenosyl-L-methionine = 2-methyladenosine(2503) in 23S rRNA + 5'-deoxyadenosine + L-methionine + 2 oxidized [2Fe-2S]-[ferredoxin] + S-adenosyl-L-homocysteine. The catalysed reaction is adenosine(37) in tRNA + 2 reduced [2Fe-2S]-[ferredoxin] + 2 S-adenosyl-L-methionine = 2-methyladenosine(37) in tRNA + 5'-deoxyadenosine + L-methionine + 2 oxidized [2Fe-2S]-[ferredoxin] + S-adenosyl-L-homocysteine. Its function is as follows. Specifically methylates position 2 of adenine 2503 in 23S rRNA and position 2 of adenine 37 in tRNAs. m2A2503 modification seems to play a crucial role in the proofreading step occurring at the peptidyl transferase center and thus would serve to optimize ribosomal fidelity. The protein is Dual-specificity RNA methyltransferase RlmN of Haemophilus ducreyi (strain 35000HP / ATCC 700724).